The sequence spans 417 residues: Riboflavin biosynthesis protein RibBA (417 aa).

The tract at residues 1–204 (MTRLDSIERA…IADLIEWRRK (204 aa)) is DHBP synthase. D-ribulose 5-phosphate is bound by residues 28–29 (RE), Asp33, 141–145 (RPGHT), and Glu165. Residue Glu29 participates in Mg(2+) binding. His144 contributes to the Mg(2+) binding site. The interval 205-417 (HEKHVQRIAE…LDDHPEADGA (213 aa)) is GTP cyclohydrolase II. 259 to 263 (RVHSE) lines the GTP pocket. Cys264, Cys275, and Cys277 together coordinate Zn(2+). GTP-binding positions include Gln280, 303–305 (EGR), and Thr325. Asp337 acts as the Proton acceptor; for GTP cyclohydrolase activity in catalysis. Arg339 functions as the Nucleophile; for GTP cyclohydrolase activity in the catalytic mechanism. Positions 360 and 365 each coordinate GTP.

The protein in the N-terminal section; belongs to the DHBP synthase family. This sequence in the C-terminal section; belongs to the GTP cyclohydrolase II family. It depends on Mg(2+) as a cofactor. The cofactor is Mn(2+). Requires Zn(2+) as cofactor.

The enzyme catalyses D-ribulose 5-phosphate = (2S)-2-hydroxy-3-oxobutyl phosphate + formate + H(+). The catalysed reaction is GTP + 4 H2O = 2,5-diamino-6-hydroxy-4-(5-phosphoribosylamino)-pyrimidine + formate + 2 phosphate + 3 H(+). It participates in cofactor biosynthesis; riboflavin biosynthesis; 2-hydroxy-3-oxobutyl phosphate from D-ribulose 5-phosphate: step 1/1. The protein operates within cofactor biosynthesis; riboflavin biosynthesis; 5-amino-6-(D-ribitylamino)uracil from GTP: step 1/4. In terms of biological role, catalyzes the conversion of D-ribulose 5-phosphate to formate and 3,4-dihydroxy-2-butanone 4-phosphate. Its function is as follows. Catalyzes the conversion of GTP to 2,5-diamino-6-ribosylamino-4(3H)-pyrimidinone 5'-phosphate (DARP), formate and pyrophosphate. This Mycobacteroides abscessus (strain ATCC 19977 / DSM 44196 / CCUG 20993 / CIP 104536 / JCM 13569 / NCTC 13031 / TMC 1543 / L948) (Mycobacterium abscessus) protein is Riboflavin biosynthesis protein RibBA.